We begin with the raw amino-acid sequence, 564 residues long: Potassium-transporting ATPase potassium-binding subunit (564 aa).

10 consecutive transmembrane segments (helical) span residues 4-24, 67-87, 135-155, 179-199, 258-278, 286-306, 376-396, 420-440, 487-507, and 528-548; these read HEIL…PFLG, TLAL…ILML, VGLT…LVAL, LYVL…QGVP, FEVA…GHYV, AILG…LWAE, IFGG…IAVF, LLVF…AIAA, LMIG…ILAI, and GPLF…LTFL.

This sequence belongs to the KdpA family. As to quaternary structure, the system is composed of three essential subunits: KdpA, KdpB and KdpC.

It is found in the cell inner membrane. In terms of biological role, part of the high-affinity ATP-driven potassium transport (or Kdp) system, which catalyzes the hydrolysis of ATP coupled with the electrogenic transport of potassium into the cytoplasm. This subunit binds the periplasmic potassium ions and delivers the ions to the membrane domain of KdpB through an intramembrane tunnel. This chain is Potassium-transporting ATPase potassium-binding subunit, found in Pseudomonas aeruginosa (strain ATCC 15692 / DSM 22644 / CIP 104116 / JCM 14847 / LMG 12228 / 1C / PRS 101 / PAO1).